Here is a 159-residue protein sequence, read N- to C-terminus: 6,7-dimethyl-8-ribityllumazine synthase (159 aa).

5-amino-6-(D-ribitylamino)uracil contacts are provided by residues tryptophan 28, 59–61 (ALE), and 81–83 (CVI). 86–87 (GT) provides a ligand contact to (2S)-2-hydroxy-3-oxobutyl phosphate. Histidine 89 (proton donor) is an active-site residue. Asparagine 114 lines the 5-amino-6-(D-ribitylamino)uracil pocket. Residue arginine 128 coordinates (2S)-2-hydroxy-3-oxobutyl phosphate.

This sequence belongs to the DMRL synthase family.

The catalysed reaction is (2S)-2-hydroxy-3-oxobutyl phosphate + 5-amino-6-(D-ribitylamino)uracil = 6,7-dimethyl-8-(1-D-ribityl)lumazine + phosphate + 2 H2O + H(+). It participates in cofactor biosynthesis; riboflavin biosynthesis; riboflavin from 2-hydroxy-3-oxobutyl phosphate and 5-amino-6-(D-ribitylamino)uracil: step 1/2. Its function is as follows. Catalyzes the formation of 6,7-dimethyl-8-ribityllumazine by condensation of 5-amino-6-(D-ribitylamino)uracil with 3,4-dihydroxy-2-butanone 4-phosphate. This is the penultimate step in the biosynthesis of riboflavin. The chain is 6,7-dimethyl-8-ribityllumazine synthase from Corynebacterium kroppenstedtii (strain DSM 44385 / JCM 11950 / CIP 105744 / CCUG 35717).